Here is a 338-residue protein sequence, read N- to C-terminus: D-erythrose-4-phosphate dehydrogenase (338 aa).

Residue 12–13 (RI) coordinates NAD(+). Substrate contacts are provided by residues 154 to 156 (SCT), arginine 200, 213 to 214 (TK), and arginine 236. Cysteine 155 (nucleophile) is an active-site residue. Asparagine 318 provides a ligand contact to NAD(+).

The protein belongs to the glyceraldehyde-3-phosphate dehydrogenase family. Epd subfamily. As to quaternary structure, homotetramer.

Its subcellular location is the cytoplasm. The catalysed reaction is D-erythrose 4-phosphate + NAD(+) + H2O = 4-phospho-D-erythronate + NADH + 2 H(+). It participates in cofactor biosynthesis; pyridoxine 5'-phosphate biosynthesis; pyridoxine 5'-phosphate from D-erythrose 4-phosphate: step 1/5. Functionally, catalyzes the NAD-dependent conversion of D-erythrose 4-phosphate to 4-phosphoerythronate. This chain is D-erythrose-4-phosphate dehydrogenase, found in Pectobacterium atrosepticum (strain SCRI 1043 / ATCC BAA-672) (Erwinia carotovora subsp. atroseptica).